The chain runs to 122 residues: Large ribosomal subunit protein uL14 (122 aa).

Belongs to the universal ribosomal protein uL14 family. In terms of assembly, part of the 50S ribosomal subunit. Forms a cluster with proteins L3 and L19. In the 70S ribosome, L14 and L19 interact and together make contacts with the 16S rRNA in bridges B5 and B8.

Binds to 23S rRNA. Forms part of two intersubunit bridges in the 70S ribosome. In Thermobifida fusca (strain YX), this protein is Large ribosomal subunit protein uL14.